The sequence spans 179 residues: Signal peptidase complex subunit 2 (179 aa).

The Cytoplasmic portion of the chain corresponds to 1 to 48; it reads MSGNNVQEEDSTFHVSNLYSETEIKKITQDFISEKIREQNFEEIVKYS. Residues 49 to 69 form a helical membrane-spanning segment; the sequence is NIRIFLSLVLIVIGTYCSIFV. At 70–74 the chain is on the extracellular side; that stretch reads QYKKN. The helical transmembrane segment at 75–95 threads the bilayer; the sequence is PVIMIQLLVAFFVVSTTLIIF. At 96–179 the chain is on the cytoplasmic side; sequence EYFFFDDVFM…AHGRTLKLKN (84 aa).

The protein belongs to the SPCS2 family. Component of the signal peptidase complex (SPC) composed of a catalytic subunit SEC11/SPC21 and three accessory subunits SPC25, SPC3/SPC22, SPC1/SPC12. The complex induces a local thinning of the ER membrane which is used to measure the length of the signal peptide (SP) h-region of protein substrates. This ensures the selectivity of the complex towards h-regions shorter than 18-20 amino acids. Within the complex, interacts with SEC11/SPC21. Component of a complex composed of SPC25 and PMV; the interaction is mediated via the transmembrane domains. The complex interacts with the SEC61 channel-forming translocon complex and is involved in the recognition and import of PEXEL motif-containing proteins into the ER for subsequent export.

It is found in the endoplasmic reticulum membrane. Functionally, component of the signal peptidase complex (SPC) which catalyzes the cleavage of N-terminal signal sequences from nascent proteins as they are translocated into the lumen of the endoplasmic reticulum. Enhances the enzymatic activity of SPC and facilitates the interactions between different components of the translocation site. Also, regulatory component of the CSP25-plasmepsin PMV complex which cleaves the pentameric localization motif RxLxE/Q/D (termed Plasmodium export element (PEXEL)) located downstream of the N-terminal secretory signal sequence of several proteins. The sequence is that of Signal peptidase complex subunit 2 from Plasmodium falciparum (isolate 3D7).